Here is a 517-residue protein sequence, read N- to C-terminus: Arp2/3 complex-activating protein rickA (517 aa).

Disordered regions lie at residues 313 to 441 (LENN…SKPA) and 461 to 517 (KVSD…SFVR). Composition is skewed to pro residues over residues 319 to 340 (PPSP…PSPL) and 347 to 378 (SSPP…PPMA). Positions 406–423 (DTSDLMREIAGPKKLKKV) constitute a WH2 domain. Residues 444-477 (VNALSGLESIFARRAVIKVSDSSSSESDSGNWSD) are central and acidic domains. The span at 463-479 (SDSSSSESDSGNWSDVS) shows a compositional bias: low complexity. Residues 500-517 (THAQKINNRNSQNPSFVR) show a composition bias toward polar residues.

In terms of assembly, homodimer.

It is found in the cell surface. Recruits and activates the Arp2/3 complex, which in turn leads to actin polymerization, promoting Rickettsia motility during infection. The chain is Arp2/3 complex-activating protein rickA (rickA) from Rickettsia conorii (strain ATCC VR-613 / Malish 7).